Here is a 123-residue protein sequence, read N- to C-terminus: Protein Wnt-7b (123 aa).

The O-palmitoleoyl serine; by PORCN moiety is linked to residue S1. Positions 33–61 (VEAVRATRLRQPTFLKIKKPRTYRKPMVT) are disordered linker. A disulfide bridge links C89 with C104. N-linked (GlcNAc...) asparagine glycosylation occurs at N90.

This sequence belongs to the Wnt family. Palmitoleoylation is required for efficient binding to frizzled receptors. Depalmitoleoylation leads to Wnt signaling pathway inhibition.

It localises to the secreted. The protein localises to the extracellular space. The protein resides in the extracellular matrix. Functionally, ligand for members of the frizzled family of seven transmembrane receptors that functions in the canonical Wnt/beta-catenin signaling pathway. Required for normal fusion of the chorion and the allantois during placenta development. Required for central nervous system (CNS) angiogenesis and blood-brain barrier regulation. The chain is Protein Wnt-7b (WNT-7B) from Alopias vulpinus (Common thresher shark).